The sequence spans 628 residues: Probable potassium transport system protein Kup (628 aa).

The next 12 membrane-spanning stretches (helical) occupy residues 12 to 32 (ALPL…IGTS), 57 to 77 (LLSL…VMLV), 106 to 126 (WYLL…GVLT), 141 to 161 (ISPA…AAVF), 174 to 194 (FYGP…VYGI), 219 to 239 (LAGV…ALYA), 253 to 273 (WLFV…AILL), 295 to 315 (LLFL…TGVF), 343 to 363 (IYVG…VLGF), 369 to 389 (LASA…ILFV), 402 to 422 (AVIA…SANL), and 425 to 445 (LHEG…VMVS).

It belongs to the HAK/KUP transporter (TC 2.A.72) family.

It is found in the cell inner membrane. The enzyme catalyses K(+)(in) + H(+)(in) = K(+)(out) + H(+)(out). Transport of potassium into the cell. Likely operates as a K(+):H(+) symporter. This chain is Probable potassium transport system protein Kup, found in Azorhizobium caulinodans (strain ATCC 43989 / DSM 5975 / JCM 20966 / LMG 6465 / NBRC 14845 / NCIMB 13405 / ORS 571).